Here is a 115-residue protein sequence, read N- to C-terminus: Cell division topological specificity factor (115 aa).

Residues 89 to 115 (TGQIQLKEPKNQSEVDSPETEGKDQNS) are disordered.

It belongs to the MinE family.

Its function is as follows. Prevents the cell division inhibition by proteins MinC and MinD at internal division sites while permitting inhibition at polar sites. This ensures cell division at the proper site by restricting the formation of a division septum at the midpoint of the long axis of the cell. The polypeptide is Cell division topological specificity factor (Prochlorococcus marinus (strain NATL2A)).